Here is a 388-residue protein sequence, read N- to C-terminus: Valine--pyruvate aminotransferase (388 aa).

Lys234 is modified (N6-(pyridoxal phosphate)lysine).

It belongs to the class-I pyridoxal-phosphate-dependent aminotransferase family. Requires pyridoxal 5'-phosphate as cofactor.

It carries out the reaction L-valine + pyruvate = 3-methyl-2-oxobutanoate + L-alanine. This is Valine--pyruvate aminotransferase from Mycobacterium tuberculosis (strain ATCC 25618 / H37Rv).